A 142-amino-acid polypeptide reads, in one-letter code: Large ribosomal subunit protein uL11 (142 aa).

The protein belongs to the universal ribosomal protein uL11 family. In terms of assembly, part of the ribosomal stalk of the 50S ribosomal subunit. Interacts with L10 and the large rRNA to form the base of the stalk. L10 forms an elongated spine to which L12 dimers bind in a sequential fashion forming a multimeric L10(L12)X complex. Post-translationally, one or more lysine residues are methylated.

In terms of biological role, forms part of the ribosomal stalk which helps the ribosome interact with GTP-bound translation factors. The polypeptide is Large ribosomal subunit protein uL11 (Erwinia tasmaniensis (strain DSM 17950 / CFBP 7177 / CIP 109463 / NCPPB 4357 / Et1/99)).